The primary structure comprises 440 residues: Enolase (440 aa).

Substrate is bound by residues His159 and Glu168. Glu211 functions as the Proton donor in the catalytic mechanism. Mg(2+)-binding residues include Asp245, Glu296, and Asp321. Positions 296 and 321 each coordinate substrate. The Proton acceptor role is filled by Lys346. Residues 373–376 and Lys397 contribute to the substrate site; that span reads SHRS.

The protein belongs to the enolase family. In terms of assembly, homodimer. The cofactor is Mg(2+).

It localises to the cytoplasm. It catalyses the reaction (2R)-2-phosphoglycerate = phosphoenolpyruvate + H2O. Its pathway is carbohydrate degradation; glycolysis; pyruvate from D-glyceraldehyde 3-phosphate: step 4/5. This Tuber borchii (White truffle) protein is Enolase (eno-1).